Here is a 583-residue protein sequence, read N- to C-terminus: Threonine--tRNA ligase (583 aa).

A catalytic region spans residues 185-478 (DHRKLGRELN…LVEHYGGAFP (294 aa)). Zn(2+) contacts are provided by C278, H329, and H455.

This sequence belongs to the class-II aminoacyl-tRNA synthetase family. Homodimer. It depends on Zn(2+) as a cofactor.

The protein localises to the cytoplasm. It carries out the reaction tRNA(Thr) + L-threonine + ATP = L-threonyl-tRNA(Thr) + AMP + diphosphate + H(+). In terms of biological role, catalyzes the attachment of threonine to tRNA(Thr) in a two-step reaction: L-threonine is first activated by ATP to form Thr-AMP and then transferred to the acceptor end of tRNA(Thr). Also edits incorrectly charged L-seryl-tRNA(Thr). In Borrelia recurrentis (strain A1), this protein is Threonine--tRNA ligase.